Consider the following 90-residue polypeptide: DNA-binding protein HU (90 aa).

The protein belongs to the bacterial histone-like protein family. As to quaternary structure, homodimer.

Histone-like DNA-binding protein which is capable of wrapping DNA to stabilize it, and thus to prevent its denaturation under extreme environmental conditions. In Haemophilus influenzae (strain ATCC 51907 / DSM 11121 / KW20 / Rd), this protein is DNA-binding protein HU (hup).